A 600-amino-acid polypeptide reads, in one-letter code: MGVKYLWDVLEPCKKTFPLDHLQNKRVCVDLSCWMVELHKVNKSYCATKEKVYLRGFFHRLRALIALNCSIILVSDGAIPGIKVPTYKRRLKARFEIADDGVEPSKETSLKRNMGSEFSCIIKEAKVIASTLGILCLDGIEEAEAQCALLNSESLCDACFSFDSDIFLFGAKTVYREICLGEGGYVVCYEMDDIKKKLGLGRNSLIALALLLGSDYSQGVRGLRQEKACELVRSIGDNVILEKVASEGLSFAEKPRKSKKQVRPSVCSKKGTLPLVVINGNNRDPERLEEIKQVIDAFMNPKCHQADSNTVSRALAEFSFQRTKLQEICHQFFEWPPEKTDEYILPKVAERNLRRFANLQSRSTEVEVNLPLHKPQMPEKCPVSEIIKTRKVQGRECFEVSWNDLEGLESSIVPADLVERACPEKIIEFKEKMAAKKKKPKPKQKQKETSSPTKSSSLVELSLELQHLDLNSTSLVSRSTLEEAEQENEQQNSKKHDYLRLIDSPDRENCNNAWSNRDRLGVGMSSFPLYPETEVIDLISPCPEARSRSVSRSYQEQKSHDHQLETVIELSDSETDDEEHCKKARELRIFLQNIRKDIIL.

Positions 1–97 are N-domain; it reads MGVKYLWDVL…KRRLKARFEI (97 aa). Residues 2–97 form an XPG-N domain region; the sequence is GVKYLWDVLE…KRRLKARFEI (96 aa). 7 residues coordinate Mg(2+): Asp30, Asp76, Glu142, Glu144, Asp163, Asp165, and Asp215. Residues 130-215 are XPG-I domain; it reads STLGILCLDG…IALALLLGSD (86 aa). I-domain regions lie at residues 130 to 218 and 130 to 219; these read STLG…DYSQ and STLG…YSQG. The segment at 215–353 is 5'-3' exonuclease domain; the sequence is DYSQGVRGLR…ILPKVAERNL (139 aa). Residues 433-458 form a disordered region; it reads MAAKKKKPKPKQKQKETSSPTKSSSL. Residues 435 to 444 show a composition bias toward basic residues; it reads AKKKKPKPKQ.

This sequence belongs to the XPG/RAD2 endonuclease family. GEN subfamily. It depends on Mg(2+) as a cofactor.

It localises to the nucleus. Endonuclease which cleaves flap structures at the junction between single-stranded DNA and double-stranded DNA with a specific cleavage site in the 5' overhang strand exactly one nucleotide 3' of the branch point. Structure- and sequence-specific nuclease that resolves holliday junctions (HJs) by symmetrically oriented incisions in two opposing strands near the junction point, thus leading to ligatable products; HJs are physical links between homologous DNA molecules that arise as central intermediary structures during homologous recombination and repair in meiotic and somatic cells. Structure-specific nuclease with 5'-flap endonuclease activity, preferentially cleaving static flaps 5' overhang strand exactly one nucleotide in the 3' direction of the branch point and, to lower extent, on the two neighboring positions. Also able to cleave double-stranded flap strand 1 one nucleotide in the 3' direction of the branch point. Together with MUS81, essential for the resolution of toxic replication structures to ensure genome stability, and to maintain telomere integrity and replication. The protein is Single-strand DNA endonuclease 1 of Arabidopsis thaliana (Mouse-ear cress).